The chain runs to 159 residues: Endoribonuclease YbeY (159 aa).

His-119, His-123, and His-129 together coordinate Zn(2+).

The protein belongs to the endoribonuclease YbeY family. Requires Zn(2+) as cofactor.

The protein resides in the cytoplasm. Single strand-specific metallo-endoribonuclease involved in late-stage 70S ribosome quality control and in maturation of the 3' terminus of the 16S rRNA. This chain is Endoribonuclease YbeY, found in Acinetobacter baylyi (strain ATCC 33305 / BD413 / ADP1).